A 417-amino-acid chain; its full sequence is RH-like protein IC (417 aa).

11 helical membrane-spanning segments follow: residues 12-32 (CLPL…YFFT), 44-64 (LVAS…GFGF), 77-97 (VAFN…LDGF), 125-145 (ISAG…MVLV), 172-192 (FYVF…KPLP), 203-223 (TIPS…WPSF), 238-258 (VFNT…VSSL), 265-285 (INMT…GTSC), 287-307 (LITS…ISIG), 331-351 (NFSL…VLHT), and 358-378 (MVGF…AIAV).

The protein belongs to the ammonium transporter (TC 2.A.49) family. Rh subfamily.

It is found in the membrane. Functionally, may be part of an oligomeric complex which is likely to have a transport or channel function in the erythrocyte membrane. This is RH-like protein IC from Gorilla gorilla gorilla (Western lowland gorilla).